The following is a 443-amino-acid chain: Lysine-specific demethylase 8 (443 aa).

Over residues 139–165 (TKLEAERGVREPGLESSKLHSPGEHSN) the composition is skewed to basic and acidic residues. The disordered stretch occupies residues 139–174 (TKLEAERGVREPGLESSKLHSPGEHSNKKSFASVTG). Residues 298–443 (GYLAQHQLFE…LSFSVSFWWS (146 aa)) enclose the JmjC domain. Residues His348, Asp350, and His427 each contribute to the Fe cation site.

Requires Fe(2+) as cofactor.

It is found in the nucleus. It catalyses the reaction N(6),N(6)-dimethyl-L-lysyl(36)-[histone H3] + 2 2-oxoglutarate + 2 O2 = L-lysyl(36)-[histone H3] + 2 formaldehyde + 2 succinate + 2 CO2. In terms of biological role, histone demethylase required for G2/M phase cell cycle progression. Specifically demethylates dimethylated 'Lys-36' (H3K36me2) of histone H3, an epigenetic repressive mark, thereby acting as a transcription activator. May play a role in the regulation of the circadian clock. The sequence is that of Lysine-specific demethylase 8 (kdm8) from Xenopus tropicalis (Western clawed frog).